Here is a 241-residue protein sequence, read N- to C-terminus: Uridylate kinase (241 aa).

Residue 15–18 (KLSG) coordinates ATP. The interval 23-28 (GAEGFG) is involved in allosteric activation by GTP. Gly57 contributes to the UMP binding site. Residues Gly58 and Arg62 each contribute to the ATP site. Residues Asp77 and 138 to 145 (TGNPFFTT) contribute to the UMP site. The ATP site is built by Thr165, Tyr171, and Asp174.

The protein belongs to the UMP kinase family. As to quaternary structure, homohexamer.

It localises to the cytoplasm. The enzyme catalyses UMP + ATP = UDP + ADP. Its pathway is pyrimidine metabolism; CTP biosynthesis via de novo pathway; UDP from UMP (UMPK route): step 1/1. With respect to regulation, allosterically activated by GTP. Inhibited by UTP. Its function is as follows. Catalyzes the reversible phosphorylation of UMP to UDP. This Serratia proteamaculans (strain 568) protein is Uridylate kinase.